The primary structure comprises 121 residues: Putative viral protein-binding protein C1 (121 aa).

The interval 21–57 (PWDRTRGHPDVPWRNLTSSPTRPLAQPAGSCMPAEPS) is disordered.

As to quaternary structure, interacts with core protein of hepatitis B virus.

The protein is Putative viral protein-binding protein C1 of Homo sapiens (Human).